A 756-amino-acid polypeptide reads, in one-letter code: MSFGRDMELEHFDERDKAQRYSRGSRVNGLPSPTHSAHCSFYRTRTLQTLSSEKKAKKVRFYRNGDRYFKGIVYAISPDRFRSFEALLADLTRTLSDNVNLPQGVRTIYTIDGLKKISSLDQLVEGESYVCGSIEPFKKLEYTKNVNPNWSVNVKTTSASRAVSSLATAKGGPSEVRENKDFIRPKLVTIIRSGVKPRKAVRILLNKKTAHSFEQVLTDITDAIKLDSGVVKRLYTLDGKQVMCLQDFFGDDDIFIACGPEKFRYQDDFLLDESECRVVKSTSYTKIASASRRGTTKSPGPSRRSKSPASTSSVNGTPGSQLSTPRSGKSPSPSPTSPGSLRKQRISQHGGSSTSLSSTKVCSSMDENDGPGEGDELGRRHSLQRGWRREESEEGFQIPATITERYKVGRTIGDGNFAVVKECIERSTAREYALKIIKKSKCRGKEHMIQNEVSILRRVKHPNIVLLIEEMDVPTELYLVMELVKGGDLFDAITSTSKYTERDASGMLYNLASAIKYLHSLNIVHRDIKPENLLVYEHQDGSKSLKLGDFGLATIVDGPLYTVCGTPTYVAPEIIAETGYGLKVDIWAAGVITYILLCGFPPFRGSGDDQEVLFDQILMGQVDFPSPYWDNVSDSAKELINMMLLVNVDQRFSAVQVLEHPWVNDDGLPENEHQLSVAGKIKKHFNTGPKPSSTAAGVSVIATTALDKERQVFRRRRNQDVRSRYKAQPAPPELNSESEDYSPSSSETVRSPNSPF.

Serine 32 and serine 36 each carry phosphoserine. Threonine 46 is modified (phosphothreonine). Doublecortin domains follow at residues 57-143 (KKVR…LEYT) and 186-269 (KLVT…QDDF). The segment at 288–393 (ASASRRGTTK…QRGWRREESE (106 aa)) is disordered. A compositionally biased stretch (low complexity) spans 297–313 (KSPGPSRRSKSPASTSS). Phosphoserine occurs at positions 305, 307, 330, 332, 334, 337, 347, 352, 353, 355, 358, 362, and 364. A compositionally biased stretch (low complexity) spans 347 to 364 (SQHGGSSTSLSSTKVCSS). Positions 366-375 (DENDGPGEGD) are enriched in acidic residues. Serine 392 bears the Phosphoserine mark. Residues 406 to 663 (YKVGRTIGDG…AVQVLEHPWV (258 aa)) enclose the Protein kinase domain. ATP-binding positions include 412-420 (IGDGNFAVV) and lysine 435. Catalysis depends on aspartate 527, which acts as the Proton acceptor. The residue at position 536 (tyrosine 536) is a Phosphotyrosine. Residues 711–723 (QVFRRRRNQDVRS) are compositionally biased toward basic and acidic residues. The segment at 711–756 (QVFRRRRNQDVRSRYKAQPAPPELNSESEDYSPSSSETVRSPNSPF) is disordered. A phosphoserine mark is found at serine 742, serine 751, and serine 754.

Belongs to the protein kinase superfamily. CAMK Ser/Thr protein kinase family. CaMK subfamily.

The catalysed reaction is L-seryl-[protein] + ATP = O-phospho-L-seryl-[protein] + ADP + H(+). It carries out the reaction L-threonyl-[protein] + ATP = O-phospho-L-threonyl-[protein] + ADP + H(+). Its function is as follows. Probable kinase that may be involved in a calcium-signaling pathway controlling neuronal migration in the developing brain. May also participate in functions of the mature nervous system. The chain is Serine/threonine-protein kinase DCLK1 (Dclk1) from Mus musculus (Mouse).